We begin with the raw amino-acid sequence, 130 residues long: L-ectoine synthase (130 aa).

The protein belongs to the ectoine synthase family.

The enzyme catalyses (2S)-4-acetamido-2-aminobutanoate = L-ectoine + H2O. It participates in amine and polyamine biosynthesis; ectoine biosynthesis; L-ectoine from L-aspartate 4-semialdehyde: step 3/3. Its function is as follows. Catalyzes the circularization of gamma-N-acetyl-alpha,gamma-diaminobutyric acid (ADABA) to ectoine (1,4,5,6-tetrahydro-2-methyl-4-pyrimidine carboxylic acid), which is an excellent osmoprotectant. This chain is L-ectoine synthase, found in Mycolicibacterium vanbaalenii (strain DSM 7251 / JCM 13017 / BCRC 16820 / KCTC 9966 / NRRL B-24157 / PYR-1) (Mycobacterium vanbaalenii).